The sequence spans 788 residues: Serine/threonine-protein kinase MARK2 (788 aa).

Residues M1 to E46 are disordered. Residues K27–D45 are compositionally biased toward polar residues. A Phosphoserine modification is found at S40. Positions Y53–M304 constitute a Protein kinase domain. Position 58 is a phosphothreonine; by autocatalysis (T58). ATP contacts are provided by residues I59–V67 and K82. Phosphoserine; by CaMK1 is present on residues S91, S92, and S93. D175 (proton acceptor) is an active-site residue. T208 bears the Phosphothreonine; by LKB1 and TAOK1 mark. Phosphoserine; by GSK3-beta is present on S212. Position 274 is a phosphoserine; by autocatalysis (S274). At T275 the chain carries Phosphothreonine; by autocatalysis. Phosphothreonine; by CaMK1 is present on T294. Residues Y323–G362 form the UBA domain. The disordered stretch occupies residues I373–G632. K376 and S409 each carry phosphoserine. The span at P418 to A432 shows a compositional bias: polar residues. Over residues E433–R445 the composition is skewed to basic and acidic residues. Residue S456 is modified to Phosphoserine. At T467 the chain carries Phosphothreonine. Polar residues predominate over residues T467–S486. Phosphoserine occurs at positions 486 and 493. Residues G495 to D504 show a composition bias toward polar residues. Over residues S511 to A525 the composition is skewed to low complexity. Phosphoserine occurs at positions 569, 571, and 592. Position 596 is a phosphothreonine; by PKC/PRKCZ (T596). Phosphoserine is present on residues S619 and S722. Residues T739–L788 form the KA1 domain.

Belongs to the protein kinase superfamily. CAMK Ser/Thr protein kinase family. SNF1 subfamily. As to quaternary structure, homodimer. Interacts with PAK5; leading to inhibit the protein kinase activity. Interacts with MAPT/TAU. Interacts with MTCL1 isoform 1; the interaction is direct and increases MARK2 microtubule-binding ability. Interacts (when phosphorylated at Thr-596) with YWHAZ. Interacts with YWHAB, YWHAG and YWHAQ. (Microbial infection) In case of infection, interacts with H.pylori CagA, leading to inhibit kinase activity and junctional and polarity defects. It depends on Mg(2+) as a cofactor. Post-translationally, autophosphorylated. Phosphorylated at Thr-208 by STK11/LKB1 in complex with STE20-related adapter-alpha (STRADA) pseudo kinase and CAB39. Phosphorylation at Thr-208 by TAOK1 activates the kinase activity, leading to phosphorylation and detachment of MAPT/TAU from microtubules. Phosphorylation at Ser-212 by GSK3-beta (GSK3B) inhibits the kinase activity. Phosphorylation by CaMK1 promotes activity and is required to promote neurite outgrowth. Phosphorylation at Thr-596 by PRKCZ/aPKC in polarized epithelial cells inhibits the kinase activity and promotes binding to 14-3-3 protein YWHAZ, leading to relocation from cell membrane to cytoplasm. In terms of tissue distribution, high levels of expression in heart, brain, skeletal muscle and pancreas, lower levels observed in lung, liver and kidney.

The protein resides in the cell membrane. It localises to the cytoplasm. The protein localises to the lateral cell membrane. Its subcellular location is the cytoskeleton. It is found in the cell projection. The protein resides in the dendrite. The catalysed reaction is L-seryl-[protein] + ATP = O-phospho-L-seryl-[protein] + ADP + H(+). It carries out the reaction L-threonyl-[protein] + ATP = O-phospho-L-threonyl-[protein] + ADP + H(+). The enzyme catalyses L-seryl-[tau protein] + ATP = O-phospho-L-seryl-[tau protein] + ADP + H(+). It catalyses the reaction L-threonyl-[tau protein] + ATP = O-phospho-L-threonyl-[tau protein] + ADP + H(+). With respect to regulation, inhibited by PAK5; inhibition is independent of the kinase activity of PAK5. Activated by phosphorylation on Thr-208. Inhibited by phosphorylation at Ser-212 and Thr-596. Inhibited by hymenialdisine. Specifically inhibited by the H.pylori CagA peptide FPLKRHDKVDDLSK that mimics host substrates and binds to the kinase substrate-binding site. Its function is as follows. Serine/threonine-protein kinase. Involved in cell polarity and microtubule dynamics regulation. Phosphorylates CRTC2/TORC2, DCX, HDAC7, KIF13B, MAP2, MAP4 and RAB11FIP2. Phosphorylates the microtubule-associated protein MAPT/TAU. Plays a key role in cell polarity by phosphorylating the microtubule-associated proteins MAP2, MAP4 and MAPT/TAU at KXGS motifs, causing detachment from microtubules, and their disassembly. Regulates epithelial cell polarity by phosphorylating RAB11FIP2. Involved in the regulation of neuronal migration through its dual activities in regulating cellular polarity and microtubule dynamics, possibly by phosphorylating and regulating DCX. Regulates axogenesis by phosphorylating KIF13B, promoting interaction between KIF13B and 14-3-3 and inhibiting microtubule-dependent accumulation of KIF13B. Also required for neurite outgrowth and establishment of neuronal polarity. Regulates localization and activity of some histone deacetylases by mediating phosphorylation of HDAC7, promoting subsequent interaction between HDAC7 and 14-3-3 and export from the nucleus. Also acts as a positive regulator of the Wnt signaling pathway, probably by mediating phosphorylation of dishevelled proteins (DVL1, DVL2 and/or DVL3). Modulates the developmental decision to build a columnar versus a hepatic epithelial cell apparently by promoting a switch from a direct to a transcytotic mode of apical protein delivery. Essential for the asymmetric development of membrane domains of polarized epithelial cells. The chain is Serine/threonine-protein kinase MARK2 from Homo sapiens (Human).